We begin with the raw amino-acid sequence, 33 residues long: Brevinin-2Ef (33 aa).

An intrachain disulfide couples Cys27 to Cys33.

Expressed by the skin glands.

It localises to the secreted. Shows antibacterial activity against representative Gram-negative and Gram-positive bacterial species, and hemolytic activity. This Pelophylax ridibundus (Marsh frog) protein is Brevinin-2Ef.